The primary structure comprises 500 residues: Neuronal acetylcholine receptor subunit beta-2 (500 aa).

An N-terminal signal peptide occupies residues M1–G24. Residues T25 to T237 are Extracellular-facing. N-linked (GlcNAc...) asparagine glycosylation is found at N50 and N167. The cysteines at positions 154 and 168 are disulfide-linked. Residues I238 to P258 traverse the membrane as a helical segment. At S259–T266 the chain is on the cytoplasmic side. The helical transmembrane segment at L267–P287 threads the bilayer. Topologically, residues P288–Y299 are extracellular. The helical transmembrane segment at L300–V320 threads the bilayer. Over H321–R458 the chain is Cytoplasmic. A helical membrane pass occupies residues L459–P479.

It belongs to the ligand-gated ion channel (TC 1.A.9) family. Acetylcholine receptor (TC 1.A.9.1) subfamily. Beta-2/CHRNB2 sub-subfamily. Neuronal AChR is a heteropentamer composed of two different types of subunits: alpha and beta. CHRNB2/Beta-2 subunit can be combined to CHRNA2/alpha-2, CHRNA3/alpha-3 or CHRNA4/alpha-4, CHRNA5/alpha-5, CHRNA6/alpha-6 and CHRNB3/beta-3 to give rise to functional receptors. CHRNA2:CHRNB2 and CHRNA4:CHRNB2 nAChR complexes exist in two subtypes: LS (low agonist sensitivity) with a (CHRNA2/4)3:(CHRNB2)2 and HS (high agonist sensitivity) with a (CHRNA2/4)2:(CHRNB2)3 stoichiometry; the subtypes differ in their subunit binding interfaces which are involved in ligand binding. Cells produce predominantly an (CHRNA4)3:(CHRNB2)2 nAChR. The stoichiometric form (CHRNA4)2:(CHRNB2)3 expression is selectively up-regulated by nicotine and has lower single channel conductance and calcium permeability. Also part of the stoichiometric forms: (CHRNA4:CHRNB2)2:CHRNB3 or (CHRNA6:CHRNB2)2:CHRNB3. Can form heteropentamers with CHRNA7, mainly found in basal forebrain cholinergic neurons. Interacts with RIC3; which is required for proper folding and assembly. Interacts with LYPD6. As to expression, expressed in most regions of the CNS.

Its subcellular location is the synaptic cell membrane. The protein resides in the cell membrane. It catalyses the reaction Ca(2+)(in) = Ca(2+)(out). The catalysed reaction is K(+)(in) = K(+)(out). The enzyme catalyses Na(+)(in) = Na(+)(out). With respect to regulation, activated by a myriad of ligands such as acetylcholine, cytisine, nicotine, choline and epibatidine. Channel potentiation by calcium is stoichiometry-selective, CHRNA4:CHRNB2 nACh receptor is achieved by calcium association with topographically distinct sites framed by anionic residues within the CHRNA4 subunit and between the CHRNA4 and CHRNB2 subunits. Oligomeric amyloid-beta protein 42 activates specifially CHRNA7:CHRNB2 nAchRs. nAChR activity is inhibited by the antagonist alpha-conotoxins BuIA, PnIA, PnIC, GID and MII, small disulfide-constrained peptides from cone snails. Functionally, component of neuronal acetylcholine receptors (nAChRs) that function as pentameric, ligand-gated cation channels with high calcium permeability among other activities. nAChRs are excitatory neurotrasnmitter receptors formed by a collection of nAChR subunits known to mediate synaptic transmission in the nervous system and the neuromuscular junction. Each nAchR subunit confers differential attributes to channel properties, including activation, deactivation and desensitization kinetics, pH sensitivity, cation permeability, and binding to allosteric modulators. CHRNB2 forms heteropentameric neuronal acetylcholine receptors with CHRNA2, CHRNA3, CHRNA4 and CHRNA6, as well as CHRNA5 and CHRNB3 as accesory subunits. Found in two major stoichiometric forms,(CHRNA4)3:(CHRNB2)2 and (CHRNA4)2:(CHRNB2)3, the two stoichiometric forms differ in their unitary conductance, calcium permeability, ACh sensitivity and potentiation by divalent cation. Heteropentameric channels with CHRNA6 and CHRNA4 exhibit high sensitivity to ACh and nicotine and are predominantly expressed in only a few brain areas, including dopaminergic neurons, norepirephrine neurons and cells of the visual system. nAChrs containing CHRNA6 subunits mediate endogenous cholinergic modulation of dopamine and gamma-aminobutyric acid (GABA) release in response to nicotine at nerve terminals. Also forms functional nAChRs with other subunits such as CHRNA7:CHRNB2, mainly expressed in basal forebrain cholinergic neurons. This chain is Neuronal acetylcholine receptor subunit beta-2 (Chrnb2), found in Rattus norvegicus (Rat).